The following is a 489-amino-acid chain: Acetyl-coenzyme A carboxylase carboxyl transferase subunit beta, chloroplastic (489 aa).

One can recognise a CoA carboxyltransferase N-terminal domain in the interval 225–489; that stretch reads LWIQCDNCYG…FFPLNKNEIK (265 aa). Zn(2+) is bound by residues Cys-229, Cys-232, Cys-245, and Cys-248. The C4-type zinc-finger motif lies at 229–248; sequence CDNCYGLKYKKVEMNVCEEC.

It belongs to the AccD/PCCB family. As to quaternary structure, acetyl-CoA carboxylase is a heterohexamer composed of biotin carboxyl carrier protein, biotin carboxylase and 2 subunits each of ACCase subunit alpha and ACCase plastid-coded subunit beta (accD). Zn(2+) serves as cofactor.

It localises to the plastid. The protein localises to the chloroplast stroma. The catalysed reaction is N(6)-carboxybiotinyl-L-lysyl-[protein] + acetyl-CoA = N(6)-biotinyl-L-lysyl-[protein] + malonyl-CoA. It functions in the pathway lipid metabolism; malonyl-CoA biosynthesis; malonyl-CoA from acetyl-CoA: step 1/1. Component of the acetyl coenzyme A carboxylase (ACC) complex. Biotin carboxylase (BC) catalyzes the carboxylation of biotin on its carrier protein (BCCP) and then the CO(2) group is transferred by the transcarboxylase to acetyl-CoA to form malonyl-CoA. The polypeptide is Acetyl-coenzyme A carboxylase carboxyl transferase subunit beta, chloroplastic (Brassica napus (Rape)).